The primary structure comprises 380 residues: MSEIALEAWGEHEALLLKPPRSPLSIPPPKPRTAVLFPRREGFYTELGGYLPEVRLRFETYGTLSRRRDNAVLVFHALTGSAHLAGTYDEETFRSLSPLEQAFGREGWWDSLVGPGRILDPALYYVVSANHLGSCYGSTGPLSLDPHTGRPYGRDFPPLTIRDLARAQARLLDHLGVEKAIVIGGSLGGMVALEFALMYPERVKKLVVLAAPARHGPWARAFNHLSRQAILQDPEYQKGNPAPKGMALARGIAMMSYRAPEGFEARWGAEPELGETYLDYQGEKFLRRFHAESYLVLSRAMDTHDVGRGRGGVEEALKRLRAIPSLFVGIDTDLLYPAWEVRQAAKAAGARYREIKSPHGHDAFLIETDQVEEILDAFLP.

An AB hydrolase-1 domain is found at 70–366 (NAVLVFHALT…SPHGHDAFLI (297 aa)). The active-site Nucleophile is Ser186. Position 250 (Arg250) interacts with substrate. Residues Asp333 and His361 contribute to the active site. A substrate-binding site is contributed by Asp362.

This sequence belongs to the AB hydrolase superfamily. MetX family. In terms of assembly, homodimer.

The protein localises to the cytoplasm. It catalyses the reaction L-homoserine + acetyl-CoA = O-acetyl-L-homoserine + CoA. Its pathway is amino-acid biosynthesis; L-methionine biosynthesis via de novo pathway; O-acetyl-L-homoserine from L-homoserine: step 1/1. Its function is as follows. Transfers an acetyl group from acetyl-CoA to L-homoserine, forming acetyl-L-homoserine. The sequence is that of Homoserine O-acetyltransferase from Thermus thermophilus (strain ATCC BAA-163 / DSM 7039 / HB27).